The chain runs to 298 residues: Elongation factor Ts (298 aa).

Positions 78 to 81 (TDFV) are involved in Mg(2+) ion dislocation from EF-Tu.

It belongs to the EF-Ts family.

It localises to the cytoplasm. In terms of biological role, associates with the EF-Tu.GDP complex and induces the exchange of GDP to GTP. It remains bound to the aminoacyl-tRNA.EF-Tu.GTP complex up to the GTP hydrolysis stage on the ribosome. This chain is Elongation factor Ts, found in Mycoplasmopsis agalactiae (strain NCTC 10123 / CIP 59.7 / PG2) (Mycoplasma agalactiae).